The following is an 831-amino-acid chain: MSVVGFDFGNENCLVAVARQRGIDVVLNDESNRETPAIVCFGDKQRFIGTAGAASTMMNPKNSISQIKRLIGRQFSDPELQRDIKSLPFSVTEGPDGYPLIHANYLGEKRAFTPTQVMGMMLSNLKGIAEKNLNTAVVDCCIGIPVYFTDLQRRAVLDAATIAGLHPLRLIHETTATALAYGIYKTDLPESDQLNVAFIDIGHASMQVCIAGFKKGQLKILSHAFDRSLGGRDFDEVLFNHFAAKFKDEYKIDVSQNAKASLRLRATCEKLKKVLSANPLAPLNIECLMDEKDVRGVIKREEFEEISIPILERVKRPLEKALSDAGLTVEDVHMVEVIGSGSRVPAMIKILTEFFGKEPRRTMNASECVSRGCALQCAILSPTFKVREFQVHESFPFSISLAWKGAASEAQNGGAENQQSTIVFPKGNPIPSVKALTFYRSGTFSVDVQYSDVNDLQAPPKISTYTIGPFQSSKGERAKLKVKVRLNLHGIVSVESATLLEEEEVEVPVTKEHSEETTKMDSDKASAEAAPASGDCDVNMQDAKDTSDATGTDNGVPESAEKPVQMETDSKAEAPKKKVKKTNVPLSELVYGALKTVEVEKAVEKEFEMALQDRVMEETKDRKNAVESYVYDMRNKLSDKYQEYITDSEREAFLANLQEVEDWLYEDGEDETKGVYVAKLEELKKVGDPVEVRYKESLERGSVIDQLGYCINSYREAAMSTDPKFDHIELAEKQKVLNECVEAEAWLRGKQQQQDTLPKYATPALLSADVKSKAEALDKFCRPIMTKPKPVAKAEAPQAKGGEQADEGKSEPEQPASAEPMETENPAEGST.

Disordered stretches follow at residues 503–579 and 786–831; these read EEVE…KKKV and TKPK…EGST. Basic and acidic residues predominate over residues 509–526; sequence VTKEHSEETTKMDSDKAS. Position 533 is a phosphoserine (Ser533).

The protein belongs to the heat shock protein 70 (TC 1.A.33) family. HSP110/SSE subfamily. In terms of assembly, interacts with HTT1 in both cytoplasm and nucleus. Constitutively expressed.

The protein localises to the cytoplasm. It localises to the nucleus. In cooperation with other chaperones, Hsp70s are key components that facilitate folding of de novo synthesized proteins, assist translocation of precursor proteins into organelles, and are responsible for degradation of damaged protein under stress conditions. The sequence is that of Heat shock 70 kDa protein 14 (HSP70-14) from Arabidopsis thaliana (Mouse-ear cress).